A 570-amino-acid chain; its full sequence is MPANIPRSDYAAMYGPTTGDRVRLADTDLIIEVERDLTGPYGEEVKFGGGKVIRDGMGQAQTTRAGGAVDTVITNALILDWTGIYKADVGLKDGRIHAIGKAGNPDTQPNVTIIVGPGTEVIAGEGRILTAGGFDSHIHYICPQQIEDALHSGLTTMLGGGTGPAHGTLATTCTPGAWHLGRMMQAADAFPMNLAFAGKGNASLPAAIEEQVNAGACALKLHEDWGTTPAAIDCCLGVADAMDVQVMIHTDTLNESGFVEHTVKAMKGRTIHAFHTEGAGGGHAPDIIKICGEEFVLPSSTNPTRPFTVNTIEEHLDMLMVCHHLDKSIPEDVAFAESRIRRETIAAEDILHDMGAFSIIASDSQAMGRVGEVIIRTWQTADKMKKQRGRLSEETGENDNFRVRRYVAKYTINPAIAHGIAHEIGSIEVGKRADLVLWNPAFFGVKPEMVLMGGTIACAQMGDPNASIPTPQPVYSRPMWGAYGRSVEHSAVTFVSEAAQAAGIGKTLGLAKQTLAVKGTRGIGKSALKLNTATPEIEVHPETYEVRANGELLTCQPAEELPLAQRYFLF.

The 439-residue stretch at 132–570 folds into the Urease domain; that stretch reads GGFDSHIHYI…LPLAQRYFLF (439 aa). 3 residues coordinate Ni(2+): His-137, His-139, and Lys-220. Lys-220 bears the N6-carboxylysine mark. His-222 contributes to the substrate binding site. Positions 249 and 275 each coordinate Ni(2+). The Proton donor role is filled by His-323. Asp-363 contributes to the Ni(2+) binding site.

The protein belongs to the metallo-dependent hydrolases superfamily. Urease alpha subunit family. Heterotrimer of UreA (gamma), UreB (beta) and UreC (alpha) subunits. Three heterotrimers associate to form the active enzyme. Ni cation is required as a cofactor. Carboxylation allows a single lysine to coordinate two nickel ions.

Its subcellular location is the cytoplasm. The catalysed reaction is urea + 2 H2O + H(+) = hydrogencarbonate + 2 NH4(+). It functions in the pathway nitrogen metabolism; urea degradation; CO(2) and NH(3) from urea (urease route): step 1/1. In Ruegeria sp. (strain TM1040) (Silicibacter sp.), this protein is Urease subunit alpha.